The sequence spans 444 residues: Probable glycine dehydrogenase (decarboxylating) subunit 1 (444 aa).

Belongs to the GcvP family. N-terminal subunit subfamily. The glycine cleavage system is composed of four proteins: P, T, L and H. In this organism, the P 'protein' is a heterodimer of two subunits.

The catalysed reaction is N(6)-[(R)-lipoyl]-L-lysyl-[glycine-cleavage complex H protein] + glycine + H(+) = N(6)-[(R)-S(8)-aminomethyldihydrolipoyl]-L-lysyl-[glycine-cleavage complex H protein] + CO2. In terms of biological role, the glycine cleavage system catalyzes the degradation of glycine. The P protein binds the alpha-amino group of glycine through its pyridoxal phosphate cofactor; CO(2) is released and the remaining methylamine moiety is then transferred to the lipoamide cofactor of the H protein. The protein is Probable glycine dehydrogenase (decarboxylating) subunit 1 of Chlorobium phaeobacteroides (strain DSM 266 / SMG 266 / 2430).